The sequence spans 339 residues: Probable long-chain-alcohol O-fatty-acyltransferase 7 (339 aa).

Transmembrane regions (helical) follow at residues 7–27, 39–59, 113–133, 143–163, 226–246, 254–274, and 287–307; these read SLIN…CLPP, IFPV…SIFT, HLST…LYVH, FLLC…LTLL, MLIG…VVFF, TGEV…EVAA, and PVVS…WLFF.

It belongs to the wax synthase family.

It is found in the membrane. The enzyme catalyses a long chain fatty alcohol + a fatty acyl-CoA = a wax ester + CoA. Its function is as follows. Catalyzes the final step in the synthesis of long-chain linear esters (waxes). This is Probable long-chain-alcohol O-fatty-acyltransferase 7 (AT7) from Arabidopsis thaliana (Mouse-ear cress).